The primary structure comprises 386 residues: Lipoyl synthase, mitochondrial (386 aa).

Residues cysteine 115, cysteine 120, cysteine 126, cysteine 146, cysteine 150, cysteine 153, and serine 362 each contribute to the [4Fe-4S] cluster site. One can recognise a Radical SAM core domain in the interval 131-351; it reads ETGTATATIM…QKLGMEMGFR (221 aa).

Belongs to the radical SAM superfamily. Lipoyl synthase family. [4Fe-4S] cluster serves as cofactor.

The protein resides in the mitochondrion. The enzyme catalyses [[Fe-S] cluster scaffold protein carrying a second [4Fe-4S](2+) cluster] + N(6)-octanoyl-L-lysyl-[protein] + 2 oxidized [2Fe-2S]-[ferredoxin] + 2 S-adenosyl-L-methionine + 4 H(+) = [[Fe-S] cluster scaffold protein] + N(6)-[(R)-dihydrolipoyl]-L-lysyl-[protein] + 4 Fe(3+) + 2 hydrogen sulfide + 2 5'-deoxyadenosine + 2 L-methionine + 2 reduced [2Fe-2S]-[ferredoxin]. It participates in protein modification; protein lipoylation via endogenous pathway; protein N(6)-(lipoyl)lysine from octanoyl-[acyl-carrier-protein]: step 2/2. In terms of biological role, catalyzes the radical-mediated insertion of two sulfur atoms into the C-6 and C-8 positions of the octanoyl moiety bound to the lipoyl domains of lipoate-dependent enzymes, thereby converting the octanoylated domains into lipoylated derivatives. The chain is Lipoyl synthase, mitochondrial from Picea sitchensis (Sitka spruce).